A 270-amino-acid polypeptide reads, in one-letter code: MSNLQTRIITAIVLGTITLWLTWVGGVGFTLFSIAIGLAMFYEWTELSATRQTAFSRLFGWAWLIVTGILLILDRGALLTIGFLVAGCAILLVTQWKSGRGWPAAGLFYAGFSALSLSLLRGDEPFGFTTIVFLFAVVWSTDITAYFNGRALGGPKLAPRFSPNKTWSGAIGGAAAAVAGGLLVASLVAAPGGWGVPVLALLLSIVSQIGDLAESWVKRQFGAKDSGRLLPGHGGVLDRVDGLVAAAALLYLFGAIFAEPDVLSAIFFSF.

7 consecutive transmembrane segments (helical) span residues 19-39 (LWLT…IGLA), 53-73 (TAFS…LLIL), 76-96 (GALL…VTQW), 101-121 (GWPA…SLLR), 126-146 (FGFT…ITAY), 183-203 (LVAS…ALLL), and 248-268 (ALLY…AIFF).

It belongs to the CDS family.

Its subcellular location is the cell inner membrane. The catalysed reaction is a 1,2-diacyl-sn-glycero-3-phosphate + CTP + H(+) = a CDP-1,2-diacyl-sn-glycerol + diphosphate. The protein operates within phospholipid metabolism; CDP-diacylglycerol biosynthesis; CDP-diacylglycerol from sn-glycerol 3-phosphate: step 3/3. The sequence is that of Phosphatidate cytidylyltransferase (cdsA) from Brucella abortus (strain 2308).